Reading from the N-terminus, the 97-residue chain is UPF0235 protein PFL_5841 (97 aa).

The protein belongs to the UPF0235 family.

The polypeptide is UPF0235 protein PFL_5841 (Pseudomonas fluorescens (strain ATCC BAA-477 / NRRL B-23932 / Pf-5)).